Here is a 336-residue protein sequence, read N- to C-terminus: Izumo sperm-egg fusion protein 1 (336 aa).

A signal peptide spans 1–16 (MTLPILLGWFLTLCSS). Positions 158 to 247 (PPLDCGEHHL…LKDQKGTALS (90 aa)) constitute an Ig-like C2-type domain. A disulfide bridge links Cys-179 with Cys-236. A helical membrane pass occupies residues 287–307 (SFLTVLILLTVLSITGSLIII).

This sequence belongs to the Izumo family. In terms of assembly, forms a complex with tmem81 and spaca6 on spermatocyte cell membrane. The complex binds to oocyte protein bncr. Expressed in sperm.

The protein resides in the cell membrane. Its subcellular location is the cytoplasmic vesicle. The protein localises to the secretory vesicle. It localises to the acrosome membrane. Functionally, essential sperm cell-surface protein required for fertilization by acting as a ligand for bncr receptor on egg. The interaction of the complex izumo1:spaca6:tmemt81 with bncr is a necessary adhesion event between sperm and egg that is required for fertilization. The chain is Izumo sperm-egg fusion protein 1 from Danio rerio (Zebrafish).